We begin with the raw amino-acid sequence, 442 residues long: Cell division protein FtsZ (442 aa).

GTP-binding positions include 18–22 (GGGVN), 105–107 (GTG), Glu-136, Arg-140, and Asp-184. Positions 329-341 (AAPAAEPVQQQVP) are enriched in low complexity. Positions 329–442 (AAPAAEPVQQ…DDLDVPSFLQ (114 aa)) are disordered. Basic and acidic residues-rich tracts occupy residues 349–362 (PEKE…REEN) and 390–431 (NDRD…RDDR).

This sequence belongs to the FtsZ family. Homodimer. Polymerizes to form a dynamic ring structure in a strictly GTP-dependent manner. Interacts directly with several other division proteins.

Its subcellular location is the cytoplasm. In terms of biological role, essential cell division protein that forms a contractile ring structure (Z ring) at the future cell division site. The regulation of the ring assembly controls the timing and the location of cell division. One of the functions of the FtsZ ring is to recruit other cell division proteins to the septum to produce a new cell wall between the dividing cells. Binds GTP and shows GTPase activity. The protein is Cell division protein FtsZ of Corynebacterium glutamicum (strain ATCC 13032 / DSM 20300 / JCM 1318 / BCRC 11384 / CCUG 27702 / LMG 3730 / NBRC 12168 / NCIMB 10025 / NRRL B-2784 / 534).